The chain runs to 321 residues: tRNA(Ile)-lysidine synthase (321 aa).

30–35 (SGGSDS) provides a ligand contact to ATP.

Belongs to the tRNA(Ile)-lysidine synthase family.

It is found in the cytoplasm. It catalyses the reaction cytidine(34) in tRNA(Ile2) + L-lysine + ATP = lysidine(34) in tRNA(Ile2) + AMP + diphosphate + H(+). In terms of biological role, ligates lysine onto the cytidine present at position 34 of the AUA codon-specific tRNA(Ile) that contains the anticodon CAU, in an ATP-dependent manner. Cytidine is converted to lysidine, thus changing the amino acid specificity of the tRNA from methionine to isoleucine. The protein is tRNA(Ile)-lysidine synthase of Chlamydia trachomatis serovar L2 (strain ATCC VR-902B / DSM 19102 / 434/Bu).